A 104-amino-acid polypeptide reads, in one-letter code: Co-chaperonin GroES (104 aa).

The protein belongs to the GroES chaperonin family. In terms of assembly, heptamer of 7 subunits arranged in a ring. Interacts with the chaperonin GroEL.

The protein localises to the cytoplasm. Together with the chaperonin GroEL, plays an essential role in assisting protein folding. The GroEL-GroES system forms a nano-cage that allows encapsulation of the non-native substrate proteins and provides a physical environment optimized to promote and accelerate protein folding. GroES binds to the apical surface of the GroEL ring, thereby capping the opening of the GroEL channel. This is Co-chaperonin GroES from Acidiphilium cryptum (strain JF-5).